A 488-amino-acid polypeptide reads, in one-letter code: Histamine H1 receptor (488 aa).

Over 1-29 the chain is Extracellular; that stretch reads MSLPNTSSASEDKMCEGNRTAMASPQLLP. N-linked (GlcNAc...) asparagine glycosylation is found at Asn-5 and Asn-18. Residues 30–50 traverse the membrane as a helical segment; that stretch reads LVVVLSSISLVTVGLNLLVLY. The Cytoplasmic portion of the chain corresponds to 51-64; sequence AVRSERKLHTVGNL. A helical membrane pass occupies residues 65 to 89; the sequence is YIVSLSVADLIVGAVVMPMNILYLI. Residues 90-97 lie on the Extracellular side of the membrane; the sequence is MTKWSLGR. A helical membrane pass occupies residues 98–123; sequence PLCLFWLSMDYVASTASIFSVFILCI. The cysteines at positions 100 and 180 are disulfide-linked. Asp-107 and Thr-112 together coordinate histamine. The segment at 107 to 112 is important for agonist binding; it reads DYVAST. At 124-144 the chain is on the cytoplasmic side; the sequence is DRYRSVQQPLRYLRYRTKTRA. Thr-140 and Thr-142 each carry phosphothreonine. The chain crosses the membrane as a helical span at residues 145 to 164; that stretch reads SATILGAWFLSFLWVIPILG. At 165–188 the chain is on the extracellular side; the sequence is WHHFTPLAPELREDKCETDFYNVT. Residues 189–211 form a helical membrane-spanning segment; that stretch reads WFKIMTAIINFYLPTLLMLWFYV. Asn-198 provides a ligand contact to histamine. Topologically, residues 212–417 are cytoplasmic; it reads KIYKAVRRHC…LNRERKAAKQ (206 aa). Ser-230 is subject to Phosphoserine. The disordered stretch occupies residues 245–337; it reads KEGAKKPGKE…SQPKMDEQSL (93 aa). Over residues 322 to 337 the composition is skewed to polar residues; the sequence is ANDQTLSQPKMDEQSL. Phosphoserine occurs at positions 344, 347, 381, 383, 397, and 399. A helical membrane pass occupies residues 418–441; sequence LGCIMAAFILCWIPYFIFFMVIAF. An important for agonist binding region spans residues 425-429; it reads FILCW. Tyr-432 provides a ligand contact to histamine. Cys-442 and Cys-445 are disulfide-bonded. Over 442–447 the chain is Extracellular; it reads CNSCCS. Residues 448–470 traverse the membrane as a helical segment; that stretch reads EPVHMFTIWLGYINSTLNPLIYP. Residues 471 to 488 are Cytoplasmic-facing; the sequence is LCNENFKKTFKKILHIRS.

The protein belongs to the G-protein coupled receptor 1 family. In terms of processing, phosphorylation at sites in the second and third cytoplasmic loops independently contribute to agonist-induced receptor down-regulation.

It localises to the cell membrane. G-protein-coupled receptor for histamine, a biogenic amine that functions as an immune modulator and a neurotransmitter. Through the H1 receptor, histamine mediates the contraction of smooth muscles and increases capillary permeability due to contraction of terminal venules. Also mediates neurotransmission in the central nervous system and thereby regulates circadian rhythms, emotional and locomotor activities as well as cognitive functions. In Mus musculus (Mouse), this protein is Histamine H1 receptor.